We begin with the raw amino-acid sequence, 343 residues long: L-threonine 3-dehydrogenase (343 aa).

Cysteine 40 serves as a coordination point for Zn(2+). Active-site charge relay system residues include threonine 42 and histidine 45. Histidine 65, glutamate 66, cysteine 95, cysteine 98, cysteine 101, and cysteine 109 together coordinate Zn(2+). Residues isoleucine 177, aspartate 197, arginine 202, 264–266 (LGI), and 288–289 (IY) each bind NAD(+).

This sequence belongs to the zinc-containing alcohol dehydrogenase family. As to quaternary structure, homotetramer. Zn(2+) is required as a cofactor.

The protein resides in the cytoplasm. It catalyses the reaction L-threonine + NAD(+) = (2S)-2-amino-3-oxobutanoate + NADH + H(+). The protein operates within amino-acid degradation; L-threonine degradation via oxydo-reductase pathway; glycine from L-threonine: step 1/2. Functionally, catalyzes the NAD(+)-dependent oxidation of L-threonine to 2-amino-3-ketobutyrate. This Vibrio parahaemolyticus serotype O3:K6 (strain RIMD 2210633) protein is L-threonine 3-dehydrogenase.